We begin with the raw amino-acid sequence, 312 residues long: Olfactory receptor-like protein COR6 (312 aa).

The Extracellular segment spans residues 1 to 26 (MASGNCTTPTTFILSGLTDNPGLQMP). Asparagine 5 carries an N-linked (GlcNAc...) asparagine glycan. The chain crosses the membrane as a helical span at residues 27 to 49 (LFMVFLAIYTITLLTNLGLIALI). At 50-57 (SIDLQLQT) the chain is on the cytoplasmic side. Residues 58-79 (PMYIFLQNLSFTDAVYSTVITP) form a helical membrane-spanning segment. Residues 80-100 (KMLATFLEETKTISYVGCILQ) are Extracellular-facing. A disulfide bridge links cysteine 97 with cysteine 179. A helical transmembrane segment spans residues 101–120 (YFSFVLLTVRECLLLAVMAY). At 121-139 (DRYAAICKPLLYPAIMTKA) the chain is on the cytoplasmic side. The helical transmembrane segment at 140–164 (VCWRLVKGLYSLAFLNFLVHTSGLL) threads the bilayer. Over 165–205 (KLSFCSSNVVNHFFCDNSPLFQISSSSTALNELLVFIFGSL) the chain is Extracellular. A helical membrane pass occupies residues 206-226 (FVMSSIITILISYVFIILTVV). The Cytoplasmic segment spans residues 227–239 (RIRSKERKYKAFS). Residues 240 to 260 (TCTSHLMAVSLFHGTIVFMYF) form a helical membrane-spanning segment. At 261–271 (QPANNFSLDKD) the chain is on the extracellular side. Residues 272-292 (KIMSLFYTVVIPMLNPLIYSW) form a helical membrane-spanning segment. Residues 293–312 (RNKEVKDALHRAIATAVLFH) lie on the Cytoplasmic side of the membrane.

It belongs to the G-protein coupled receptor 1 family.

It is found in the cell membrane. In terms of biological role, odorant receptor. This is Olfactory receptor-like protein COR6 (COR6) from Gallus gallus (Chicken).